Reading from the N-terminus, the 408-residue chain is L-lactate oxidase (408 aa).

An FMN hydroxy acid dehydrogenase domain is found at 14 to 370 (NEAIKMVNVD…KHADIRQINY (357 aa)). Tyrosine 40 is a binding site for pyruvate. Residues 93–95 (PIA), serine 122, and glutamine 144 contribute to the FMN site. Tyrosine 146 serves as a coordination point for pyruvate. Threonine 172 contacts FMN. Residue arginine 181 coordinates pyruvate. Positions 241 and 263 each coordinate FMN. Pyruvate-binding residues include histidine 265 and arginine 268. Catalysis depends on histidine 265, which acts as the Proton acceptor. FMN-binding positions include 296–300 (DSGVR) and arginine 320.

This sequence belongs to the FMN-dependent alpha-hydroxy acid dehydrogenase family. Homotetramer. FMN serves as cofactor.

The catalysed reaction is a (2S)-2-hydroxycarboxylate + O2 = a 2-oxocarboxylate + H2O2. The enzyme catalyses (S)-lactate + O2 = pyruvate + H2O2. It carries out the reaction 2-hydroxyoctanoate + O2 = 2-oxooctanoate + H2O2. It catalyses the reaction glycolate + O2 = glyoxylate + H2O2. The catalysed reaction is mandelate + O2 = phenylglyoxylate + H2O2. The enzyme catalyses 2-hydroxyoctadecanoate + O2 = 2-oxooctadecanoate + H2O2. Functionally, oxidase that catalyzes the oxidation of a broad range of 2-hydroxyacids in vitro, such as (S)-lactate, 2-hydroxyoctanoate, and to a lesser extent glycolate, mandelate and 2-hydroxyoctadecanoate, to the corresponding 2-oxoacids, with a reduction of O2 to H2O2. May be involved in the utilization of L-lactate as an energy source for growth. The chain is L-lactate oxidase from Lactobacillus jensenii.